The sequence spans 594 residues: Aspartate--tRNA(Asp/Asn) ligase (594 aa).

Glutamate 175 serves as a coordination point for L-aspartate. The tract at residues 199–202 (QIYK) is aspartate. L-aspartate is bound by residues arginine 221 and histidine 454. Residue 221–223 (RDE) participates in ATP binding. Position 488 (glutamate 488) interacts with ATP. Arginine 495 lines the L-aspartate pocket. 540-543 (GIDR) contacts ATP.

Belongs to the class-II aminoacyl-tRNA synthetase family. Type 1 subfamily. Homodimer.

The protein localises to the cytoplasm. It carries out the reaction tRNA(Asx) + L-aspartate + ATP = L-aspartyl-tRNA(Asx) + AMP + diphosphate. Aspartyl-tRNA synthetase with relaxed tRNA specificity since it is able to aspartylate not only its cognate tRNA(Asp) but also tRNA(Asn). Reaction proceeds in two steps: L-aspartate is first activated by ATP to form Asp-AMP and then transferred to the acceptor end of tRNA(Asp/Asn). This chain is Aspartate--tRNA(Asp/Asn) ligase, found in Chelativorans sp. (strain BNC1).